We begin with the raw amino-acid sequence, 334 residues long: GTP 3',8-cyclase (334 aa).

In terms of domain architecture, Radical SAM core spans 11-236 (GFNRKIDYLR…ESTESSMGPA (226 aa)). GTP is bound at residue arginine 20. Residues cysteine 27 and cysteine 31 each coordinate [4Fe-4S] cluster. Tyrosine 33 is a binding site for S-adenosyl-L-methionine. Residue cysteine 34 participates in [4Fe-4S] cluster binding. Arginine 69 lines the GTP pocket. Glycine 73 provides a ligand contact to S-adenosyl-L-methionine. Threonine 100 lines the GTP pocket. Serine 124 lines the S-adenosyl-L-methionine pocket. Lysine 161 contributes to the GTP binding site. Methionine 195 contacts S-adenosyl-L-methionine. The [4Fe-4S] cluster site is built by cysteine 260 and cysteine 263. Residue 265–267 (RVR) coordinates GTP. Residue cysteine 277 coordinates [4Fe-4S] cluster.

It belongs to the radical SAM superfamily. MoaA family. In terms of assembly, monomer and homodimer. Requires [4Fe-4S] cluster as cofactor.

It carries out the reaction GTP + AH2 + S-adenosyl-L-methionine = (8S)-3',8-cyclo-7,8-dihydroguanosine 5'-triphosphate + 5'-deoxyadenosine + L-methionine + A + H(+). It functions in the pathway cofactor biosynthesis; molybdopterin biosynthesis. In terms of biological role, catalyzes the cyclization of GTP to (8S)-3',8-cyclo-7,8-dihydroguanosine 5'-triphosphate. This Pseudomonas putida (strain ATCC 700007 / DSM 6899 / JCM 31910 / BCRC 17059 / LMG 24140 / F1) protein is GTP 3',8-cyclase.